A 503-amino-acid polypeptide reads, in one-letter code: UDP-N-acetylmuramoylalanine--D-glutamate ligase (503 aa).

Residue 129–135 (GTNGKTT) coordinates ATP.

The protein belongs to the MurCDEF family.

It localises to the cytoplasm. The enzyme catalyses UDP-N-acetyl-alpha-D-muramoyl-L-alanine + D-glutamate + ATP = UDP-N-acetyl-alpha-D-muramoyl-L-alanyl-D-glutamate + ADP + phosphate + H(+). The protein operates within cell wall biogenesis; peptidoglycan biosynthesis. Its function is as follows. Cell wall formation. Catalyzes the addition of glutamate to the nucleotide precursor UDP-N-acetylmuramoyl-L-alanine (UMA). In Burkholderia orbicola (strain MC0-3), this protein is UDP-N-acetylmuramoylalanine--D-glutamate ligase.